Reading from the N-terminus, the 300-residue chain is MYLKGLYTALITPFTPTGQLDEEGLKKLIQIQLHHQVDGVVVLGTTGESPTLTQIEKRRIIEIALEEIQGRIKVIVGTGSYSTQQAIEQTLQAKQMGADAALIVTPYYNKPTQEGIFKHFEAINQAVSFPICLYNIQGRTGQNIQTHTLKRISTLSSIIGVKETSGDINQIMDVIEAFRQSHPNFAILSGDDALTLPMIALGGHGIISVVSNLVPAAMKSLVNAALNGNFKKARIIHNQLYSFIKAAFIETNPIPIKAALSLSKLPAGSCRLPLCDLSQNHSQKLAQILNELPQEWISHG.

Residue Thr46 participates in pyruvate binding. Tyr134 serves as the catalytic Proton donor/acceptor. The active-site Schiff-base intermediate with substrate is Lys162. Ile207 contributes to the pyruvate binding site.

Belongs to the DapA family. In terms of assembly, homotetramer; dimer of dimers.

It localises to the cytoplasm. The catalysed reaction is L-aspartate 4-semialdehyde + pyruvate = (2S,4S)-4-hydroxy-2,3,4,5-tetrahydrodipicolinate + H2O + H(+). It functions in the pathway amino-acid biosynthesis; L-lysine biosynthesis via DAP pathway; (S)-tetrahydrodipicolinate from L-aspartate: step 3/4. Its function is as follows. Catalyzes the condensation of (S)-aspartate-beta-semialdehyde [(S)-ASA] and pyruvate to 4-hydroxy-tetrahydrodipicolinate (HTPA). This Protochlamydia amoebophila (strain UWE25) protein is 4-hydroxy-tetrahydrodipicolinate synthase.